Reading from the N-terminus, the 165-residue chain is Protein C2-DOMAIN ABA-RELATED 7 (165 aa).

An N-acetylmethionine modification is found at M1. Residues 1–106 form the C2 domain; sequence MEELVGLLRI…HKMGLQELPD (106 aa). The Ca(2+) site is built by R21, D22, D27, D73, K74, D75, and D81.

The protein belongs to the plant CAR protein family. Binds to PYR/PYL/RCAR abscisic acid intracellular receptors in an ABA-independent manner, both at the plasma membrane and in the nucleus.

It localises to the cell membrane. The protein resides in the nucleus. Functionally, stimulates the GTPase/ATPase activities of Obg-like ATPases. Mediates the transient calcium-dependent interaction of PYR/PYL/RCAR abscisic acid (ABA) receptors with the plasma membrane and thus regulates ABA sensitivity. The chain is Protein C2-DOMAIN ABA-RELATED 7 from Arabidopsis thaliana (Mouse-ear cress).